A 271-amino-acid polypeptide reads, in one-letter code: Mannosyl-3-phosphoglycerate phosphatase (271 aa).

D13 acts as the Nucleophile in catalysis. Residues D13, D15, and D214 each coordinate Mg(2+).

The protein belongs to the HAD-like hydrolase superfamily. MPGP family. Mg(2+) is required as a cofactor.

It is found in the cytoplasm. It carries out the reaction 2-O-(alpha-D-mannosyl)-3-phosphoglycerate + H2O = (2R)-2-O-(alpha-D-mannosyl)-glycerate + phosphate. In Shigella sonnei (strain Ss046), this protein is Mannosyl-3-phosphoglycerate phosphatase (yedP).